A 622-amino-acid polypeptide reads, in one-letter code: Cilia- and flagella-associated protein 206 (622 aa).

The segment at 568–593 (NTSQVYPLKEASTQSKREGSSRVPRP) is disordered.

It belongs to the CFAP206 family. Expressed in the sperm, oviduct, lung, nasal cavity, brain ependyma and choroid plexus.

The protein resides in the cytoplasm. It localises to the cytoskeleton. The protein localises to the cilium axoneme. It is found in the cilium basal body. Essential for sperm motility and is involved in the regulation of the beating frequency of motile cilia on the epithelial cells of the respiratory tract. Required for the establishment of radial spokes in sperm flagella. This chain is Cilia- and flagella-associated protein 206, found in Mus musculus (Mouse).